The following is a 573-amino-acid chain: NEDD4-binding protein 3-B (573 aa).

Disordered regions lie at residues 119–138 (EFSKSSLPERGHSDKSRFGP), 173–220 (CVGS…NSYS), and 384–405 (GENEELRQKQSQSDNSGPNLED). Residues 125–135 (LPERGHSDKSR) show a composition bias toward basic and acidic residues. The span at 186–196 (SNSHSNNPSES) shows a compositional bias: low complexity. Polar residues-rich tracts occupy residues 207–220 (DSKQNSINSLNSYS) and 392–401 (KQSQSDNSGP). Residues 287–474 (ESVEDVARQL…CLQALEDVKS (188 aa)) are a coiled coil.

The protein belongs to the N4BP3 family.

The protein resides in the cytoplasmic vesicle. The protein localises to the cell projection. It is found in the axon. Its subcellular location is the dendrite. In terms of biological role, plays a role in axon and dendrite arborization during cranial nerve development. Also important for neural crest migration and early development of other anterior structures including eye, brain and cranial cartilage. The sequence is that of NEDD4-binding protein 3-B from Xenopus laevis (African clawed frog).